A 181-amino-acid chain; its full sequence is Large ribosomal subunit protein uL5 (181 aa).

This sequence belongs to the universal ribosomal protein uL5 family. In terms of assembly, part of the 50S ribosomal subunit; part of the 5S rRNA/L5/L18/L25 subcomplex. Contacts the 5S rRNA and the P site tRNA. Forms a bridge to the 30S subunit in the 70S ribosome.

Functionally, this is one of the proteins that bind and probably mediate the attachment of the 5S RNA into the large ribosomal subunit, where it forms part of the central protuberance. In the 70S ribosome it contacts protein S13 of the 30S subunit (bridge B1b), connecting the 2 subunits; this bridge is implicated in subunit movement. Contacts the P site tRNA; the 5S rRNA and some of its associated proteins might help stabilize positioning of ribosome-bound tRNAs. This is Large ribosomal subunit protein uL5 from Picosynechococcus sp. (strain ATCC 27264 / PCC 7002 / PR-6) (Agmenellum quadruplicatum).